Consider the following 117-residue polypeptide: Huntingtin-interacting protein M (117 aa).

Basic and acidic residues-rich tracts occupy residues 1-11 (MSEKKSQEKPC) and 83-97 (QDRERQRDNDREPSR). Disordered stretches follow at residues 1 to 25 (MSEKKSQEKPCSDNNQIEDPSSRPE) and 74 to 117 (NINN…RRNG).

In terms of assembly, may interact with the N-terminus of HD.

The sequence is that of Huntingtin-interacting protein M from Mus musculus (Mouse).